The chain runs to 115 residues: MDKKKARLRRAASTRHKLQNSTRLVVHRTIRHIYAQIIAPHNSKVLIAASTVEKMIANQLKNTGNKEAAVAVGKKIAERALAQGIYNVSFDRSGYQYHGRVQALAEAAREVGLNF.

The protein belongs to the universal ribosomal protein uL18 family. In terms of assembly, part of the 50S ribosomal subunit; part of the 5S rRNA/L5/L18/L25 subcomplex. Contacts the 5S and 23S rRNAs.

Its function is as follows. This is one of the proteins that bind and probably mediate the attachment of the 5S RNA into the large ribosomal subunit, where it forms part of the central protuberance. The chain is Large ribosomal subunit protein uL18 from Baumannia cicadellinicola subsp. Homalodisca coagulata.